The chain runs to 90 residues: Progonadoliberin-3 (90 aa).

The first 23 residues, 1–23, serve as a signal peptide directing secretion; that stretch reads MDVSSKVVVQVLLLALVVQVTLC. The residue at position 24 (Q24) is a Pyrrolidone carboxylic acid. At G33 the chain carries Glycine amide.

The protein belongs to the GnRH family. In terms of tissue distribution, expressed in neuron cell bodies of the nucleus olfactoretinalis.

It is found in the secreted. In terms of biological role, stimulates the secretion of gonadotropins. In Oryzias latipes (Japanese rice fish), this protein is Progonadoliberin-3 (gnrh3).